The following is a 515-amino-acid chain: MGFLRFGRESAPPPTVQSDTIIPFHYWDDDHHTRGLSFDVTFRVDDILDPEKLRCALSRLLELGDWRKLGARIRRNAEGGLEYHVPQCFDDKRPGFAYSTVAYDMNVADHPQASRLAQPHYLDAAGRPAVQDTTYTATPEFRSFIRTPAFPDRLEGWLRSDSPQLGVRIITFLDATLVTVSFLHSLTDMMGLDAVLDAWSAVLRGREDEVKSFVGFAHDPLAGLTESKTEPLQKYVFADTLLLGWTWFWFALRYIVTIELFWQHREEERVIFLPAKHLQQMRSKAMAELTARGAHDSDTPLFVSEGDVLFAWWTRVVLRAEKPDPSRTVNMRNTYCCRSILAELGHIPSATCALVTNAVFATLTFLSVRQVLEEPLGFTAFEIRKSLIQQRNAEQLQALDRIQRKTLDNAHHPALFGNPSMYTVMMSNWVKAKLFQVDFSAAVIRKGMATGKRSNQLGRPSCIQGTGTKGYATRNTGVVIGKDAAGNFWLLYSLRKEIWPAVEQQLLSMSLDDAA.

Catalysis depends on proton acceptor residues His-184 and Asp-438.

This sequence belongs to the plant acyltransferase family. In terms of assembly, monomer.

It catalyses the reaction sphingofungin B + acetyl-CoA = sphingofungin C + CoA. It participates in secondary metabolite biosynthesis. Functionally, acetyltransferase; part of the gene cluster that mediates the biosynthesis of sphingofungins, bioactive molecules acting as sphingolipid inhibitors via inhibiting serine palmitoyl transferase (SPT). Within the pathway, sphE catalyzes the O-acetylation of the C-5 hydroxyl group of sphingofungin B to produce sphingofungin C. SphE can also convert sphingofungin B1 into sphingofungin C1 and sphingofungin B2 into sphingofungin C2. Sphingofungin biosynthesis starts with the PKS sphB that produces an C18 polyketide precursor 3-hydroxyoctadeca-4,10-dienoyl-ACP containing one delta-6 desaturation and one delta-12 desaturation. The aminoacyl transferase sphA uses the sphB product to produce 3-keto-presphingofungin by adding an aminomalonate molecule. SphF then reduces the C-3 ketone of 3-keto-presphingofungin which leads to presphingofungin. The cytochrome P450 monooxygenase sphH converts presphingofungin into sphingofungin B1 which is further converted to sphingofungin B by the dioxygenase sphC. SphC is also able to convert presphingofungin into sphingofungin B2. The acetyltransferase sphE acetylates sphingofungin B to produce sphingofungin C, but can also convert sphingofungin B1 into sphingofungin C1 and sphingofungin B2 into sphingofungin C2. Finally, sphingofungin C can be spontaneously converted into sphingofungin D. This chain is Acetyltransferase sphE, found in Aspergillus fumigatus (strain CBS 144.89 / FGSC A1163 / CEA10) (Neosartorya fumigata).